The primary structure comprises 189 residues: Large ribosomal subunit protein eL14 (189 aa).

This sequence belongs to the eukaryotic ribosomal protein eL14 family.

In terms of biological role, component of the large ribosomal subunit. The ribosome is a large ribonucleoprotein complex responsible for the synthesis of proteins in the cell. The sequence is that of Large ribosomal subunit protein eL14 from Trypanosoma brucei brucei.